A 130-amino-acid chain; its full sequence is Glycine cleavage system H protein (130 aa).

In terms of domain architecture, Lipoyl-binding spans 24–106 (TLTIGITDHA…YGEGWIMRIR (83 aa)). Position 65 is an N6-lipoyllysine (K65). The tract at residues 111–130 (DDLEQLLDPEDYQDLVADEE) is disordered.

It belongs to the GcvH family. As to quaternary structure, the glycine cleavage system is composed of four proteins: P, T, L and H. Requires (R)-lipoate as cofactor.

Functionally, the glycine cleavage system catalyzes the degradation of glycine. The H protein shuttles the methylamine group of glycine from the P protein to the T protein. In Alkalilimnicola ehrlichii (strain ATCC BAA-1101 / DSM 17681 / MLHE-1), this protein is Glycine cleavage system H protein.